Reading from the N-terminus, the 494-residue chain is MSAPAGRLQPQRFAALPNPVTAENKFWRSFKVPVVAKEYSAITSIHFSAESPYDFAVTSGARVQIYGASSRSVKKTIARFKDTAYSGNIRKDGKLLLAGDATGLVQIFDLSTRSILRALDAHQFPVHVTQFCPYANTTFLSGSDDKTVKVWDLSTGAVQYDLSGHEDYVRTASWMSATRLVSGGYDGTIRLWDTRIADPEVMSFSHGEAIDVVLPMQSGSTVISAGGPSIKVWDLVAGRQTPTKKLSNHQKSITCLAMNSENTRLLSGGLDGHVKIYNISDWKVVHGMKYSGPILSMGLSPDSCNLVVGMSNGTLSQRTRRITKQTSSKTPFLGGVGSAFGVVGKKKQIYKGENDEFYVEEARRKRLRPFDKALKSFCYSDALDMVLENGSPVLIITMLIELLHVGGLRIALSNRDDLSLTPLINFLRKYIRDPRFSETLCIVTSTILDIYGAALGGSVMVENAISKLREKVEQEVAVTQRANELVGMLQMLSA.

7 WD repeats span residues 37–76, 79–118, 121–161, 164–202, 205–243, 248–287, and 289–328; these read KEYS…VKKT, RFKD…ILRA, AHQF…VQYD, GHED…PEVM, SHGE…QTPT, NHQK…VVHG, and KYSG…QTSS.

As to quaternary structure, component of the ribosomal small subunit (SSU) processome.

The protein resides in the nucleus. Its subcellular location is the nucleolus. In terms of biological role, involved in nucleolar processing of pre-18S ribosomal RNA. Required for optimal pre-ribosomal RNA transcription by RNA polymerase I together with a subset of U3 proteins required for transcription (t-UTPs). This Schizosaccharomyces pombe (strain 972 / ATCC 24843) (Fission yeast) protein is U3 small nucleolar RNA-associated protein 15 (utp15).